The sequence spans 339 residues: Putative zinc metalloprotease CA_C1796 (339 aa).

Residue H20 coordinates Zn(2+). Residue E21 is part of the active site. H24 serves as a coordination point for Zn(2+). The next 3 membrane-spanning stretches (helical) occupy residues 91-113, 275-297, and 310-330; these read LSIV…CIVG, QLGV…LFLF, and VGFV…VVTI. A PDZ domain is found at 99-177; sequence IMNLILAAVL…GIKLALKNNG (79 aa).

It belongs to the peptidase M50B family. Requires Zn(2+) as cofactor.

The protein localises to the cell membrane. This chain is Putative zinc metalloprotease CA_C1796, found in Clostridium acetobutylicum (strain ATCC 824 / DSM 792 / JCM 1419 / IAM 19013 / LMG 5710 / NBRC 13948 / NRRL B-527 / VKM B-1787 / 2291 / W).